The primary structure comprises 291 residues: 33 kDa chaperonin (291 aa).

Disulfide bonds link Cys235–Cys237 and Cys268–Cys271.

The protein belongs to the HSP33 family. In terms of processing, under oxidizing conditions two disulfide bonds are formed involving the reactive cysteines. Under reducing conditions zinc is bound to the reactive cysteines and the protein is inactive.

It is found in the cytoplasm. Functionally, redox regulated molecular chaperone. Protects both thermally unfolding and oxidatively damaged proteins from irreversible aggregation. Plays an important role in the bacterial defense system toward oxidative stress. This is 33 kDa chaperonin from Bacillus velezensis (strain DSM 23117 / BGSC 10A6 / LMG 26770 / FZB42) (Bacillus amyloliquefaciens subsp. plantarum).